The sequence spans 412 residues: Argininosuccinate synthase (412 aa).

ATP contacts are provided by residues 10-18 and alanine 36; that span reads AYSGGLDTS. L-citrulline contacts are provided by tyrosine 87 and serine 92. At tyrosine 87 the chain carries Phosphotyrosine. The residue at position 112 (lysine 112) is an N6-acetyllysine. The residue at position 113 (tyrosine 113) is a Phosphotyrosine. 115–123 serves as a coordination point for ATP; it reads SHGATGKGN. 3 residues coordinate L-aspartate: threonine 119, asparagine 123, and aspartate 124. Asparagine 123 is a binding site for L-citrulline. Arginine 127 serves as a coordination point for L-citrulline. N6-acetyllysine; by CLOCK occurs at positions 165 and 176. Residues serine 180 and serine 189 each contribute to the L-citrulline site. Serine 180 is modified (phosphoserine). The residue at position 219 (serine 219) is a Phosphoserine. L-citrulline contacts are provided by glutamate 270 and tyrosine 282.

This sequence belongs to the argininosuccinate synthase family. Type 1 subfamily. In terms of assembly, homotetramer. Interacts with NMRAL1. Interacts with CLOCK; in a circadian manner. Forms tissue-specific complexes with ASL, SLC7A1, HSP90AA1 and nitric oxide synthase NOS1, NOS2 or NOS3; the complex regulates cell-autonomous L-arginine synthesis and citrulline recycling while channeling extracellular L-arginine to nitric oxide synthesis pathway. Acetylated by CLOCK in a circadian manner which negatively regulates its enzyme activity. Deacetylated by histone deacetylases.

The protein resides in the cytoplasm. Its subcellular location is the cytosol. The enzyme catalyses L-citrulline + L-aspartate + ATP = 2-(N(omega)-L-arginino)succinate + AMP + diphosphate + H(+). The protein operates within amino-acid biosynthesis; L-arginine biosynthesis; L-arginine from L-ornithine and carbamoyl phosphate: step 2/3. Its pathway is nitrogen metabolism; urea cycle; (N(omega)-L-arginino)succinate from L-aspartate and L-citrulline: step 1/1. Its function is as follows. One of the enzymes of the urea cycle, the metabolic pathway transforming neurotoxic amonia produced by protein catabolism into inocuous urea in the liver of ureotelic animals. Catalyzes the formation of arginosuccinate from aspartate, citrulline and ATP and together with ASL it is responsible for the biosynthesis of arginine in most body tissues. The polypeptide is Argininosuccinate synthase (Bos taurus (Bovine)).